Reading from the N-terminus, the 182-residue chain is Ribosome-recycling factor (182 aa).

Belongs to the RRF family.

Its subcellular location is the cytoplasm. Functionally, responsible for the release of ribosomes from messenger RNA at the termination of protein biosynthesis. May increase the efficiency of translation by recycling ribosomes from one round of translation to another. This Thermosynechococcus vestitus (strain NIES-2133 / IAM M-273 / BP-1) protein is Ribosome-recycling factor.